A 112-amino-acid chain; its full sequence is MASYRKQRIENDIIRLINRTIINEIYDPVVKLGHVSHVKLSADFFHAVVYLDCYDRSQIQTVVNAFKKAQGVFSQMLAQNLYLAKSVKLHFVKDDAIDNALKIEQIINSLKN.

It belongs to the RbfA family. Monomer. Binds 30S ribosomal subunits, but not 50S ribosomal subunits or 70S ribosomes.

It is found in the cytoplasm. Its function is as follows. One of several proteins that assist in the late maturation steps of the functional core of the 30S ribosomal subunit. Associates with free 30S ribosomal subunits (but not with 30S subunits that are part of 70S ribosomes or polysomes). Required for efficient processing of 16S rRNA. May interact with the 5'-terminal helix region of 16S rRNA. This chain is Ribosome-binding factor A, found in Mycoplasma genitalium (strain ATCC 33530 / DSM 19775 / NCTC 10195 / G37) (Mycoplasmoides genitalium).